Here is a 285-residue protein sequence, read N- to C-terminus: Transcription factor LBX1 (285 aa).

Positions 1–20 (MTSKEDGKAAPGEERRRSPL) are enriched in basic and acidic residues. Positions 1–36 (MTSKEDGKAAPGEERRRSPLDHLPPPANSNKPLTPF) are disordered. The segment at residues 125–184 (RRKSRTAFTNHQIYELEKRFLYQKYLSPADRDQIAQQLGLTNAQVITWFQNRRAKLKRDL) is a DNA-binding region (homeobox). Positions 212-285 (EQNSEASGGG…EEDEEIDVDD (74 aa)) are disordered. Residues 218–230 (SGGGGGGGGGGCG) are compositionally biased toward gly residues. A compositionally biased stretch (acidic residues) spans 272–285 (CSEDEEDEEIDVDD).

In terms of assembly, interacts with SKOR1 which acts as a transcriptional corepressor.

The protein resides in the nucleus. Functionally, transcription factor required for the development of GABAergic interneurons in the dorsal horn of the spinal cord and migration and further development of hypaxial muscle precursor cells for limb muscles, diaphragm and hypoglossal cord. The polypeptide is Transcription factor LBX1 (Rattus norvegicus (Rat)).